A 690-amino-acid polypeptide reads, in one-letter code: Ectopic P granules protein 2 (690 aa).

Coiled coils occupy residues Ile-20 to Val-181, Glu-359 to Glu-409, Leu-458 to Leu-494, and Ala-560 to Arg-643. The LIR 1 signature appears at Tyr-61–Leu-64. The tract at residues Asp-381–Leu-385 is required for interaction with lgg-1. The interval Glu-666–Glu-690 is disordered. The segment covering Glu-671–Trp-684 has biased composition (basic and acidic residues). Positions Trp-684–Val-687 match the LIR 2 motif.

As to quaternary structure, interacts with sepa-1. Interacts (via the LIR motifs) with lgg-1 and lgg-2. Shows strong interaction with lgg-1 and weak interaction with lgg-2.

The protein resides in the cytoplasm. Its function is as follows. Involved in autophagy. Thought to act as an adapter protein that brings PGL granules to autophagic structures containing lgg-1. Association with other adapters such as sepa-1 is required for the accumulation and degradation of germ cell specific P-granules by autophagy in somatic cells. This ensures exclusive localization of the P-granules in germ cells. May also play a role in the removal of sepa-1 from somatic cells. This is Ectopic P granules protein 2 from Caenorhabditis elegans.